The chain runs to 212 residues: Nuclear phosphoprotein UL3 homolog (212 aa).

It belongs to the alphaherpesvirinae HHV-1 UL3 family. Phosphorylated.

It is found in the host nucleus. This chain is Nuclear phosphoprotein UL3 homolog, found in Equus caballus (Horse).